The following is a 777-amino-acid chain: Zygote defective protein 12 (777 aa).

Composition is skewed to basic and acidic residues over residues 1–10 and 18–36; these read MLDLTNKESE and KYED…PFKE. Residues 1–36 are disordered; that stretch reads MLDLTNKESESSDNGNSKYEDSIDGREVGTSKPFKE. The tract at residues 1-234 is interaction with dli-1; sequence MLDLTNKESE…ESSGKLNGNG (234 aa). The region spanning 44–169 is the Calponin-homology (CH) domain; the sequence is QADLADMAVW…VTLAHIGKNA (126 aa). Disordered stretches follow at residues 217-242 and 273-292; these read QSEL…RSNA and SFET…DISI. A compositionally biased stretch (low complexity) spans 218-235; it reads SELNSLSESSGKLNGNGS. Coiled-coil stretches lie at residues 236-399 and 425-688; these read SERR…HHVK and NTEL…QENR. The span at 273-288 shows a compositional bias: polar residues; sequence SFETAQHDMSSNSESG. A helical transmembrane segment spans residues 747 to 767; the sequence is AMASILVLGFLVFIAWMFINI. Residues 749-777 form an interaction with unc-84 region; the sequence is ASILVLGFLVFIAWMFININSALNAPPNA.

The protein belongs to the hook family. As to quaternary structure, homodimer. Interacts with the dynein subunit dli-1 via its N-terminus. May interact with microtubules. Interacts with sut-2. Interacts (via C-terminus) with unc-84 (via C-terminus); the interaction is direct. As to expression, expressed in the syncytial gonad, oocytes, and in all cells during the development of the early embryo.

The protein resides in the nucleus membrane. It localises to the cytoplasm. Its subcellular location is the cytoskeleton. It is found in the microtubule organizing center. The protein localises to the centrosome. Functionally, cytoskeletal linker protein, which is essential for attachment of the centrosome to the nucleus. Required for dynein localization to the nuclear envelope. Forms a LINC (LInker of Nucleoskeleton and Cytoskeleton) complex together with unc-84, that may be involved in DNA damage repair. This Caenorhabditis elegans protein is Zygote defective protein 12.